A 447-amino-acid chain; its full sequence is tRNA-2-methylthio-N(6)-dimethylallyladenosine synthase (447 aa).

The MTTase N-terminal domain maps to 10 to 128; the sequence is KLFCISTYGC…FPEYLHRVLQ (119 aa). [4Fe-4S] cluster contacts are provided by cysteine 19, cysteine 55, cysteine 89, cysteine 165, cysteine 169, and cysteine 172. The region spanning 151-382 is the Radical SAM core domain; the sequence is RKSDVKAFVT…EAINKKVVIK (232 aa). A TRAM domain is found at 384-447; the sequence is KEYEGKVVEV…PFSLIGEIVE (64 aa).

This sequence belongs to the methylthiotransferase family. MiaB subfamily. Monomer. [4Fe-4S] cluster is required as a cofactor.

The protein resides in the cytoplasm. The enzyme catalyses N(6)-dimethylallyladenosine(37) in tRNA + (sulfur carrier)-SH + AH2 + 2 S-adenosyl-L-methionine = 2-methylsulfanyl-N(6)-dimethylallyladenosine(37) in tRNA + (sulfur carrier)-H + 5'-deoxyadenosine + L-methionine + A + S-adenosyl-L-homocysteine + 2 H(+). Functionally, catalyzes the methylthiolation of N6-(dimethylallyl)adenosine (i(6)A), leading to the formation of 2-methylthio-N6-(dimethylallyl)adenosine (ms(2)i(6)A) at position 37 in tRNAs that read codons beginning with uridine. This Clostridium perfringens (strain ATCC 13124 / DSM 756 / JCM 1290 / NCIMB 6125 / NCTC 8237 / Type A) protein is tRNA-2-methylthio-N(6)-dimethylallyladenosine synthase.